The chain runs to 420 residues: Serine hydroxymethyltransferase (420 aa).

(6S)-5,6,7,8-tetrahydrofolate is bound by residues Leu-121 and 125 to 127 (GHL). Lys-230 carries the post-translational modification N6-(pyridoxal phosphate)lysine. (6S)-5,6,7,8-tetrahydrofolate contacts are provided by residues Glu-246 and 354–356 (SPF).

The protein belongs to the SHMT family. As to quaternary structure, homodimer. The cofactor is pyridoxal 5'-phosphate.

The protein resides in the cytoplasm. It catalyses the reaction (6R)-5,10-methylene-5,6,7,8-tetrahydrofolate + glycine + H2O = (6S)-5,6,7,8-tetrahydrofolate + L-serine. It participates in one-carbon metabolism; tetrahydrofolate interconversion. The protein operates within amino-acid biosynthesis; glycine biosynthesis; glycine from L-serine: step 1/1. Its function is as follows. Catalyzes the reversible interconversion of serine and glycine with tetrahydrofolate (THF) serving as the one-carbon carrier. This reaction serves as the major source of one-carbon groups required for the biosynthesis of purines, thymidylate, methionine, and other important biomolecules. Also exhibits THF-independent aldolase activity toward beta-hydroxyamino acids, producing glycine and aldehydes, via a retro-aldol mechanism. The protein is Serine hydroxymethyltransferase of Rickettsia akari (strain Hartford).